The following is a 186-amino-acid chain: Elongation factor P (186 aa).

It belongs to the elongation factor P family.

It localises to the cytoplasm. It functions in the pathway protein biosynthesis; polypeptide chain elongation. Functionally, involved in peptide bond synthesis. Stimulates efficient translation and peptide-bond synthesis on native or reconstituted 70S ribosomes in vitro. Probably functions indirectly by altering the affinity of the ribosome for aminoacyl-tRNA, thus increasing their reactivity as acceptors for peptidyl transferase. The sequence is that of Elongation factor P from Synechococcus sp. (strain CC9902).